The chain runs to 133 residues: uncharacterized protein (133 aa).

The signal sequence occupies residues 1–22 (MYRSSISIQVFICVLFLPLDSG). Asparagine 111 carries N-linked (GlcNAc...) asparagine glycosylation.

The protein localises to the secreted. This is an uncharacterized protein from Saccharomyces cerevisiae (strain ATCC 204508 / S288c) (Baker's yeast).